We begin with the raw amino-acid sequence, 275 residues long: Subtilisin (275 aa).

Residue Q2 coordinates Ca(2+). The region spanning P5–A274 is the Peptidase S8 domain. D32 functions as the Charge relay system in the catalytic mechanism. D41 lines the Ca(2+) pocket. The active-site Charge relay system is the H64. L75, N77, I79, V81, A169, Y171, and T174 together coordinate Ca(2+). S221 functions as the Charge relay system in the catalytic mechanism.

The protein belongs to the peptidase S8 family. Ca(2+) is required as a cofactor.

It is found in the secreted. The catalysed reaction is Hydrolysis of proteins with broad specificity for peptide bonds, and a preference for a large uncharged residue in P1. Hydrolyzes peptide amides.. In terms of biological role, subtilisin is an extracellular alkaline serine protease, it catalyzes the hydrolysis of proteins and peptide amides. The sequence is that of Subtilisin (apr) from Bacillus pumilus (Bacillus mesentericus).